The primary structure comprises 604 residues: Zinc finger protein chinmo (604 aa).

Positions Ala32–Gln98 constitute a BTB domain. Disordered regions lie at residues Arg122–Ser155, Cys291–His310, Arg330–Thr437, and Asn450–Thr470. Residues Pro364 to Thr374 are compositionally biased toward low complexity. A compositionally biased stretch (polar residues) spans Ala384–Leu409. Over residues Ala425 to Thr437 the composition is skewed to acidic residues. Low complexity predominate over residues Ser461 to Thr470. 2 C2H2-type zinc fingers span residues Leu517 to His540 and Val545 to His568.

In terms of tissue distribution, broadly expressed in the developing larval central nervous system (at protein level). Expressed in the larval lymph gland and circulating hemocytes (at protein level). Expressed in all cell types of the adult testis stem cell niche but not detected in somatic cells of the adult ovary (at protein level). In the testis, expressed at high levels in cyst stem cells and early cyst cells and, at lower levels, in germline stem cells (at protein level).

The protein resides in the nucleus. Required for morphological differentiation of postmitotic neurons during postembryonic brain development. Ensures production of appropriate neuron subtypes within a lineage by preventing precocious generation of late neuronal types of that lineage. Acts as a downstream mediator of the transcriptional activator Stat92e and is required for the development of the eye-antennal disk which gives rise to the adult eye, antenna and head capsule, for transcriptional repression of the Notch receptor ligand Ser and for the self-renewal of cyst stem cells in the testis. In the adult testis, maintains the male identify of adult somatic cyst stem cells. Represses expression and alternative splicing of transformer pre-mRNA, resulting in the production of the male-specific isoform of transcription factor dsx which ensures male-specific transcription of target genes. Plays a role in actin nuclear localization through its involvement in repressing the expression of the kinase Cdi. This maintains the cofilin/actin-depolymerizing factor homolog tsr in its unphosphorylated state which is required for actin nuclear import. The chain is Zinc finger protein chinmo from Drosophila melanogaster (Fruit fly).